The primary structure comprises 412 residues: Short-chain specific acyl-CoA dehydrogenase, mitochondrial (412 aa).

The N-terminal 24 residues, 1-24 (MAAALLARASGPARRALCPRAWRQ), are a transit peptide targeting the mitochondrion. T27 carries the phosphothreonine modification. N6-acetyllysine; alternate is present on K51. K51 carries the N6-succinyllysine; alternate modification. K72 bears the N6-acetyllysine mark. N6-acetyllysine; alternate is present on K129. At K129 the chain carries N6-succinyllysine; alternate. Residues 152–161 (FALSEPGNGS) and 185–187 (WIT) each bind FAD. S161 provides a ligand contact to substrate. K208 bears the N6-acetyllysine mark. N6-acetyllysine; alternate is present on K262. An N6-succinyllysine; alternate modification is found at K262. Residue 269-272 (DMGR) participates in substrate binding. R297 is an FAD binding site. N6-acetyllysine; alternate is present on K306. At K306 the chain carries N6-succinyllysine; alternate. Residues Q308 and 365-369 (QILGG) each bind FAD. E392 functions as the Proton acceptor in the catalytic mechanism. Residue G393 participates in substrate binding. 394–396 (TSE) is an FAD binding site.

Belongs to the acyl-CoA dehydrogenase family. In terms of assembly, homotetramer. Requires FAD as cofactor.

It localises to the mitochondrion matrix. The enzyme catalyses a short-chain 2,3-saturated fatty acyl-CoA + oxidized [electron-transfer flavoprotein] + H(+) = a short-chain (2E)-enoyl-CoA + reduced [electron-transfer flavoprotein]. It carries out the reaction butanoyl-CoA + oxidized [electron-transfer flavoprotein] + H(+) = (2E)-butenoyl-CoA + reduced [electron-transfer flavoprotein]. The catalysed reaction is pentanoyl-CoA + oxidized [electron-transfer flavoprotein] + H(+) = (2E)-pentenoyl-CoA + reduced [electron-transfer flavoprotein]. It catalyses the reaction hexanoyl-CoA + oxidized [electron-transfer flavoprotein] + H(+) = (2E)-hexenoyl-CoA + reduced [electron-transfer flavoprotein]. Its pathway is lipid metabolism; mitochondrial fatty acid beta-oxidation. Short-chain specific acyl-CoA dehydrogenase is one of the acyl-CoA dehydrogenases that catalyze the first step of mitochondrial fatty acid beta-oxidation, an aerobic process breaking down fatty acids into acetyl-CoA and allowing the production of energy from fats. The first step of fatty acid beta-oxidation consists in the removal of one hydrogen from C-2 and C-3 of the straight-chain fatty acyl-CoA thioester, resulting in the formation of trans-2-enoyl-CoA. Among the different mitochondrial acyl-CoA dehydrogenases, short-chain specific acyl-CoA dehydrogenase acts specifically on acyl-CoAs with saturated 4 to 6 carbons long primary chains. In Homo sapiens (Human), this protein is Short-chain specific acyl-CoA dehydrogenase, mitochondrial (ACADS).